We begin with the raw amino-acid sequence, 193 residues long: NAD(P)H-quinone oxidoreductase subunit I (193 aa).

2 consecutive 4Fe-4S ferredoxin-type domains span residues glycine 55–glutamate 84 and lysine 95–glutamate 124. Residues cysteine 64, cysteine 67, cysteine 70, cysteine 74, cysteine 104, cysteine 107, cysteine 110, and cysteine 114 each coordinate [4Fe-4S] cluster. The interval leucine 169 to aspartate 193 is disordered.

The protein belongs to the complex I 23 kDa subunit family. As to quaternary structure, NDH-1 is composed of at least 11 different subunits. The cofactor is [4Fe-4S] cluster.

The protein resides in the cellular thylakoid membrane. It carries out the reaction a plastoquinone + NADH + (n+1) H(+)(in) = a plastoquinol + NAD(+) + n H(+)(out). The enzyme catalyses a plastoquinone + NADPH + (n+1) H(+)(in) = a plastoquinol + NADP(+) + n H(+)(out). Its function is as follows. NDH-1 shuttles electrons from an unknown electron donor, via FMN and iron-sulfur (Fe-S) centers, to quinones in the respiratory and/or the photosynthetic chain. The immediate electron acceptor for the enzyme in this species is believed to be plastoquinone. Couples the redox reaction to proton translocation, and thus conserves the redox energy in a proton gradient. The sequence is that of NAD(P)H-quinone oxidoreductase subunit I from Rippkaea orientalis (strain PCC 8801 / RF-1) (Cyanothece sp. (strain PCC 8801)).